A 90-amino-acid chain; its full sequence is Small ribosomal subunit protein bS20 (90 aa).

It belongs to the bacterial ribosomal protein bS20 family.

Functionally, binds directly to 16S ribosomal RNA. This chain is Small ribosomal subunit protein bS20, found in Roseiflexus sp. (strain RS-1).